A 90-amino-acid chain; its full sequence is Small ribosomal subunit protein uS15c (90 aa).

It belongs to the universal ribosomal protein uS15 family. Part of the 30S ribosomal subunit.

The protein resides in the plastid. It is found in the chloroplast. The polypeptide is Small ribosomal subunit protein uS15c (rps15) (Acorus calamus (Sweet flag)).